The primary structure comprises 353 residues: 2-oxoglutarate-Fe(II) type oxidoreductase ppzD (353 aa).

Positions 181-292 (NTSELRLNHY…RYSVAYFGKP (112 aa)) constitute a Fe2OG dioxygenase domain. Residues H208, D210, and H268 each coordinate Fe cation. Residue R283 coordinates 2-oxoglutarate.

Belongs to the iron/ascorbate-dependent oxidoreductase family. The cofactor is Fe(2+).

The enzyme catalyses L-proline + 2-oxoglutarate + O2 = trans-4-hydroxy-L-proline + succinate + CO2. It carries out the reaction L-proline + 2-oxoglutarate + O2 = trans-3-hydroxy-L-proline + succinate + CO2. It catalyses the reaction D-proline + 2-oxoglutarate + O2 = cis-4-hydroxy-D-proline + succinate + CO2. Its pathway is secondary metabolite biosynthesis. 2-oxoglutarate-Fe(II) type oxidoreductase; part of the gene cluster that mediates the biosynthesis of pyrrolopyrazines, secondary metabolites showing insecticidal activity. Within the pathway, ppzD converts L-proline into trans-4-hydroxy-L-proline as a major product, yielding a key precursor for peramine biosynthesis. PpzD is also able to convert L-proline into trans-3-hydroxy-L-proline. The single multifunctional NRPS ppzA is sufficient to produce peramine via condensation of 1-pyrroline-5-carboxylate and arginine, N-methylation of the alpha-amino group of arginine and reduction of the thioester and the cyclization to form an iminium ion resulting in release from the peptide synthetase. Deprotonation of this intermediate and oxidation of the pyrroline ring would give rise to peramine. In Epichloe species that produce only peramine, the peramine synthetase gene is not localized in a gene cluster, in contrast to Metarhizium species that contain additional pyrrolopyrazine biosynthesis genes. The 2-oxoglutarate-Fe(II) type oxidoreductase ppzC hydroxylates peramine to yield the newly identified compound 8-hydroxyperamine whereas ppzD converts L-proline into trans-4-hydroxy-L-proline, a precursor of peramine biosynthesis. This chain is 2-oxoglutarate-Fe(II) type oxidoreductase ppzD, found in Metarhizium rileyi (strain RCEF 4871) (Nomuraea rileyi).